The chain runs to 206 residues: LexA repressor (206 aa).

The H-T-H motif DNA-binding region spans 28-48 (RAEIARRLGFKSANAAEEHLK). Active-site for autocatalytic cleavage activity residues include S123 and K160.

It belongs to the peptidase S24 family. Homodimer.

The catalysed reaction is Hydrolysis of Ala-|-Gly bond in repressor LexA.. Represses a number of genes involved in the response to DNA damage (SOS response), including recA and lexA. In the presence of single-stranded DNA, RecA interacts with LexA causing an autocatalytic cleavage which disrupts the DNA-binding part of LexA, leading to derepression of the SOS regulon and eventually DNA repair. This is LexA repressor from Shewanella piezotolerans (strain WP3 / JCM 13877).